Consider the following 982-residue polypeptide: Cell division cycle-associated protein 2 (982 aa).

Residues 75–87 show a composition bias toward polar residues; sequence VKTSSGKSTSSLQ. The tract at residues 75–97 is disordered; that stretch reads VKTSSGKSTSSLQKARRRSTVGV. Phosphoserine occurs at positions 100, 122, and 133. Disordered stretches follow at residues 192-216 and 274-315; these read SGFPVNSSSKRRRISSQDSPDNYLS and TPLS…CGSS. Composition is skewed to polar residues over residues 207–216 and 275–315; these read SQDSPDNYLS and PLSS…CGSS. Phosphoserine is present on residues Ser-286, Ser-296, and Ser-306. Residue Thr-309 is modified to Phosphothreonine. One can recognise a PP1-binding domain in the interval 379 to 436; that stretch reads KRKRVTFGEDLSPEVFDESLPANTPLCKGGTPVRPRTVKTTSPLQSPVHEQFLQPNFD. A phosphoserine mark is found at Ser-390 and Ser-397. 4 disordered regions span residues 400–473, 489–545, 568–638, and 651–716; these read ANTP…NTCS, TRTS…KSYR, KPLL…QSQV, and ASER…PQSQ. Position 402 is a phosphothreonine (Thr-402). Position 424 is a phosphoserine (Ser-424). Composition is skewed to polar residues over residues 451 to 473 and 498 to 512; these read SFANLSLSKSSLSETPPGTNTCS and TLSSTGVCSSYTTQA. The span at 518–545 shows a compositional bias: basic residues; it reads KMSRRKSREKKHTSAALPKKKQVLKSYR. Residues Ser-572 and Ser-595 each carry the phosphoserine modification. Polar residues predominate over residues 651-668; sequence ASERGPNASTRDTGSEGN. Basic and acidic residues predominate over residues 669–685; sequence TRAESKCQSAKEPKPGT. A Phosphoserine modification is found at Ser-735. Lys-741 is covalently cross-linked (Glycyl lysine isopeptide (Lys-Gly) (interchain with G-Cter in SUMO2)). Residues 910-982 are disordered; the sequence is ECPSSKEETI…SLKGESAQLP (73 aa). Ser-913 bears the Phosphoserine mark. Residues 931–942 show a composition bias toward low complexity; the sequence is VSGSESQGVGSS. Phosphoserine is present on Ser-950. The span at 952–964 shows a compositional bias: polar residues; that stretch reads CGSTLTDANSATQ. Position 973 is a phosphoserine (Ser-973).

As to quaternary structure, interacts with PPP1CC. Post-translationally, phosphorylated by CDK1. May regulate its subcellular location.

It localises to the nucleus. Regulator of chromosome structure during mitosis required for condensin-depleted chromosomes to retain their compact architecture through anaphase. Acts by mediating the recruitment of phopsphatase PP1-gamma subunit (PPP1CC) to chromatin at anaphase and into the following interphase. At anaphase onset, its association with chromatin targets a pool of PPP1CC to dephosphorylate substrates. This is Cell division cycle-associated protein 2 (Cdca2) from Mus musculus (Mouse).